A 385-amino-acid polypeptide reads, in one-letter code: Serine/threonine-protein kinase 52 (385 aa).

The Protein kinase domain maps to 82–356 (LIIKTVLARG…PEMDEVVPML (275 aa)). ATP is bound by residues 88-96 (LARGTFGTV) and Lys-109. The active-site Proton acceptor is Asp-227.

It belongs to the protein kinase superfamily. Ser/Thr protein kinase family. Binds to CBC1. Associates with PHOT1, PHOT2, BLUS1 and PM H(+)-ATPase (e.g. AHA1). In terms of processing, autophosphorylated. Phosphorylated by HT1 in response to low CO(2) concentrations. Expressed in guard cells.

It is found in the cytoplasm. It localises to the cytosol. The enzyme catalyses L-seryl-[protein] + ATP = O-phospho-L-seryl-[protein] + ADP + H(+). It carries out the reaction L-threonyl-[protein] + ATP = O-phospho-L-threonyl-[protein] + ADP + H(+). Its function is as follows. Serine/threonine protein kinase that phosphorylates proteins on serine and threonine residues. Collectively with CBC1, acts as a negative regulator of stomatal opening, probably via the inhibition of plasma membrane-type ATPases (AHA1 and AHA2) activity in guard cells, but in an abscisic acid (ABA)-independent manner. However, at low concentrations of CO(2), together with CBC1, stimulates stomatal opening via the inhibition of S-type anion channels in response to blue light (BL) and red light (RL), thus being a key component to maximize photosynthesis in the light under low CO(2) conditions. Required for temperature decrease in leaves. Downstream target of HIGH LEAF TEMPERATURE1 (HT1) during low CO(2)-induced stomatal opening. In Arabidopsis thaliana (Mouse-ear cress), this protein is Serine/threonine-protein kinase 52.